The sequence spans 1435 residues: Nitric oxide synthase 1 (1435 aa).

Residues 1–206 (MEEHVFGVQQ…LQGSGDKNEL (206 aa)) are interaction with NOSIP. Positions 17-99 (SVRLFKRKVG…ETHVVLILRG (83 aa)) constitute a PDZ domain. 2 disordered regions span residues 110-201 (TFTG…QGSG) and 277-304 (NNPY…SKCP). Residues 164–246 (QGHGQEAGSP…TGVQVDRDFD (83 aa)) are interaction with DYNLL1/PIN. A compositionally biased stretch (polar residues) spans 290–300 (GKQSPTKNGSP). Serine 340 is a binding site for (6R)-L-erythro-5,6,7,8-tetrahydrobiopterin. Cysteine 421 provides a ligand contact to heme b. L-arginine-binding residues include glutamine 484, tryptophan 593, tyrosine 594, and glutamate 598. Positions 683, 684, and 697 each coordinate (6R)-L-erythro-5,6,7,8-tetrahydrobiopterin. Tyrosine 712 contacts heme b. A calmodulin-binding region spans residues 731-751 (KRRAIGFKKLAEAVKFSAKLM). One can recognise a Flavodoxin-like domain in the interval 761 to 941 (ATILYATETG…AFRTWAKKVF (181 aa)). The FMN site is built by threonine 767, glutamate 768, threonine 769, lysine 771, serine 772, serine 813, threonine 814, and glycine 818. Serine 853, serine 863, and serine 864 each carry phosphoserine. Residues serine 892, histidine 897, cysteine 899, glutamate 925, and glutamine 929 each contribute to the FMN site. The 248-residue stretch at 996 to 1243 (KRVSAARLLS…VRGAPSFRLP (248 aa)) folds into the FAD-binding FR-type domain. Arginine 1016 lines the NADP(+) pocket. Histidine 1038, arginine 1179, tyrosine 1180, tyrosine 1181, serine 1182, threonine 1197, and alanine 1199 together coordinate FAD. Serine 1202 provides a ligand contact to NADP(+). FAD contacts are provided by tyrosine 1203, valine 1216, cysteine 1217, and serine 1218. NADP(+) contacts are provided by threonine 1257, arginine 1290, serine 1319, arginine 1320, lysine 1326, tyrosine 1328, glutamine 1330, aspartate 1363, threonine 1404, and arginine 1406.

The protein belongs to the NOS family. As to quaternary structure, homodimer. Interacts with DLG4; the interaction possibly being prevented by the association between NOS1 and CAPON. Forms a ternary complex with CAPON and RASD1. Forms a ternary complex with CAPON and SYN1. Interacts with ZDHHC23. Interacts with NOSIP; which may impair its synaptic location. Interacts with HTR4. Interacts with SLC6A4. Interacts with VAC14. Interacts (via N-terminal domain) with DLG4 (via N-terminal tandem pair of PDZ domains). Interacts with SLC6A4. Forms a complex with ASL, ASS1 and SLC7A1; the complex regulates cell-autonomous L-arginine synthesis and citrulline recycling while channeling extracellular L-arginine to nitric oxide synthesis pathway. Interacts with DMD; localizes NOS1 to sarcolemma in muscle cells. Interacts with DYNLL1; inhibits the nitric oxide synthase activity. Heme b serves as cofactor. FAD is required as a cofactor. The cofactor is FMN. Requires (6R)-L-erythro-5,6,7,8-tetrahydrobiopterin as cofactor. Post-translationally, ubiquitinated; mediated by STUB1/CHIP in the presence of Hsp70 and Hsp40 (in vitro).

It is found in the cell membrane. It localises to the sarcolemma. The protein resides in the cell projection. The protein localises to the dendritic spine. The catalysed reaction is 2 L-arginine + 3 NADPH + 4 O2 + H(+) = 2 L-citrulline + 2 nitric oxide + 3 NADP(+) + 4 H2O. Its activity is regulated as follows. Stimulated by calcium/calmodulin. Inhibited by DYNLL1 that prevents the dimerization of the protein. Inhibited by NOSIP. Produces nitric oxide (NO) which is a messenger molecule with diverse functions throughout the body. In the brain and peripheral nervous system, NO displays many properties of a neurotransmitter. Probably has nitrosylase activity and mediates cysteine S-nitrosylation of cytoplasmic target proteins such SRR. This chain is Nitric oxide synthase 1 (NOS1), found in Oryctolagus cuniculus (Rabbit).